The chain runs to 509 residues: Transmembrane protein 180 (509 aa).

At Met1–Phe10 the chain is on the extracellular side. Residues His11 to Ser42 form a helical membrane-spanning segment. Residues Val43 to Gly54 are Cytoplasmic-facing. A helical transmembrane segment spans residues Glu55–Ser73. Residues Asp74–Arg98 are Extracellular-facing. The chain crosses the membrane as a helical span at residues Ala99–Val116. The Cytoplasmic portion of the chain corresponds to Ala117–Gln124. A helical transmembrane segment spans residues Phe125–Asp149. At Leu150–Ser153 the chain is on the extracellular side. The helical transmembrane segment at Ala154–Met177 threads the bilayer. Residues Ser178 to Ser189 lie on the Cytoplasmic side of the membrane. A helical membrane pass occupies residues Phe190–Lys221. At Ala222–Arg259 the chain is on the extracellular side. The helical transmembrane segment at Asn260–Glu287 threads the bilayer. Residues His288–Ser300 lie on the Cytoplasmic side of the membrane. Residues Phe301–Leu320 traverse the membrane as a helical segment. The Extracellular portion of the chain corresponds to Cys321–Gly325. A helical transmembrane segment spans residues Val326–Leu345. Topologically, residues Leu346–Tyr353 are cytoplasmic. A helical transmembrane segment spans residues Leu354 to Asn388. At Arg389–Leu397 the chain is on the extracellular side. The helical transmembrane segment at Leu398–Tyr424 threads the bilayer. At Thr425–Gly458 the chain is on the cytoplasmic side. The helical transmembrane segment at Cys459 to Ser477 threads the bilayer. Over Trp478 to Ile509 the chain is Extracellular.

Its subcellular location is the cell membrane. This chain is Transmembrane protein 180, found in Gallus gallus (Chicken).